Reading from the N-terminus, the 144-residue chain is Large ribosomal subunit protein uL13 (144 aa).

It belongs to the universal ribosomal protein uL13 family. As to quaternary structure, part of the 50S ribosomal subunit.

This protein is one of the early assembly proteins of the 50S ribosomal subunit, although it is not seen to bind rRNA by itself. It is important during the early stages of 50S assembly. This is Large ribosomal subunit protein uL13 from Lachnoclostridium phytofermentans (strain ATCC 700394 / DSM 18823 / ISDg) (Clostridium phytofermentans).